The sequence spans 562 residues: Serine/threonine-protein kinase STN7, chloroplastic (562 aa).

The transit peptide at 1 to 45 (MATISPGGAYIGTPSPFLGKKLKPFSLTSPILSFKPTVKLNSSCR) directs the protein to the chloroplast. In terms of domain architecture, Protein kinase spans 134 to 452 (FVVGKKLGEG…AKAALAHPYF (319 aa)). ATP is bound by residues 140–148 (LGEGSFGVV) and lysine 167. Aspartate 279 serves as the catalytic Proton acceptor. Serine 526 bears the Phosphoserine mark. 2 positions are modified to phosphothreonine: threonine 537 and threonine 541.

The protein belongs to the protein kinase superfamily. Ser/Thr protein kinase family. Phosphorylated.

Its subcellular location is the plastid. The protein resides in the chloroplast thylakoid membrane. It catalyses the reaction L-seryl-[protein] + ATP = O-phospho-L-seryl-[protein] + ADP + H(+). It carries out the reaction L-threonyl-[protein] + ATP = O-phospho-L-threonyl-[protein] + ADP + H(+). Functionally, serine/threonine protein kinase required for state transition by phosphorylating light-harvesting complex II outer antennae (LCHII). State transition plays a central role in response to environmental changes and allows to adjust to changing light conditions via the redistribution of light excitation energy between photosystem II (PSII) and photosystem I (PSI). Phosphorylates the minor light harvesting protein LHCB4.2/CP29 and is involved in the light-dependent phosphorylation of TSP9. Acts as a key component of the long-term response (LTR) signaling pathway. Mediates phosphorylation-dependent PTAC16 subcellular localization to regulate plastid gene expression. This is Serine/threonine-protein kinase STN7, chloroplastic (STN7) from Arabidopsis thaliana (Mouse-ear cress).